Reading from the N-terminus, the 312-residue chain is Ribosomal RNA small subunit methyltransferase H (312 aa).

Residues 35 to 37, aspartate 55, phenylalanine 79, aspartate 100, and glutamine 107 each bind S-adenosyl-L-methionine; that span reads GGH. The interval 279–312 is disordered; it reads LVGKSQRPGPGEVAANPRSRSAVMRVAERTGGAA.

The protein belongs to the methyltransferase superfamily. RsmH family.

The protein localises to the cytoplasm. It carries out the reaction cytidine(1402) in 16S rRNA + S-adenosyl-L-methionine = N(4)-methylcytidine(1402) in 16S rRNA + S-adenosyl-L-homocysteine + H(+). In terms of biological role, specifically methylates the N4 position of cytidine in position 1402 (C1402) of 16S rRNA. The sequence is that of Ribosomal RNA small subunit methyltransferase H from Aromatoleum aromaticum (strain DSM 19018 / LMG 30748 / EbN1) (Azoarcus sp. (strain EbN1)).